The primary structure comprises 415 residues: Dynein assembly factor with WD repeat domains 1 (415 aa).

WD repeat units follow at residues 90 to 129 (AHIL…ELHT), 132 to 174 (GHRN…HTFR), 175 to 214 (GHTA…EALT), 217 to 256 (GHAA…RIHT), 259 to 298 (GHRG…CVAT), 301 to 340 (GHDD…CLAK), 343 to 384 (GHEG…QVLK), and 386 to 415 (HTDE…RIWR).

This sequence belongs to the WD repeat WDR69 family.

Its subcellular location is the cytoplasm. The protein localises to the cytoskeleton. The protein resides in the flagellum basal body. It localises to the flagellum axoneme. In terms of biological role, required for axonemal dynein assembly and ciliary motility in ciliated organs, including Kupffer's vesicle, during embryogenesis. Facilitates the onset of robust cilia motility during development. This is Dynein assembly factor with WD repeat domains 1 (daw1) from Xenopus laevis (African clawed frog).